We begin with the raw amino-acid sequence, 70 residues long: Peptide BmKn2 (70 aa).

A signal peptide spans methionine 1 to alanine 23. At phenylalanine 36 the chain carries Phenylalanine amide. The propeptide occupies serine 40–tyrosine 70.

This sequence belongs to the non-disulfide-bridged peptide (NDBP) superfamily. Short antimicrobial peptide (group 4) family. In terms of tissue distribution, expressed by the venom gland.

It is found in the secreted. The protein localises to the target cell membrane. In terms of biological role, antimicrobial peptide with potent activity against bacteria. Has strong antibacterial activity against Gram-positive bacteria S.aureus, M.luteus, B.subtilis, and Gram-negative bacteria E.coli, P.aeruginosa and N.gonorrhoeae. Also shows low activity against HIV-1 PV. This chain is Peptide BmKn2, found in Olivierus martensii (Manchurian scorpion).